A 157-amino-acid polypeptide reads, in one-letter code: Transcription elongation factor GreA (157 aa).

This sequence belongs to the GreA/GreB family.

Necessary for efficient RNA polymerase transcription elongation past template-encoded arresting sites. The arresting sites in DNA have the property of trapping a certain fraction of elongating RNA polymerases that pass through, resulting in locked ternary complexes. Cleavage of the nascent transcript by cleavage factors such as GreA or GreB allows the resumption of elongation from the new 3'terminus. GreA releases sequences of 2 to 3 nucleotides. This is Transcription elongation factor GreA from Mesorhizobium japonicum (strain LMG 29417 / CECT 9101 / MAFF 303099) (Mesorhizobium loti (strain MAFF 303099)).